Here is a 231-residue protein sequence, read N- to C-terminus: Eukaryotic translation initiation factor 4E-1 (231 aa).

The disordered stretch occupies residues 1-55 (MVVEDTQKSSITDDQITANPNNENEDLEEGEILDDDDSSATSRPPSSSGALARNP). Positions 8–18 (KSSITDDQITA) are enriched in polar residues. The span at 23 to 38 (ENEDLEEGEILDDDDS) shows a compositional bias: acidic residues. The segment covering 39 to 48 (SATSRPPSSS) has biased composition (low complexity). EIF4G-binding regions lie at residues 56–59 (HPLE) and 66–102 (FDNP…NNIH). MRNA-binding positions include 74–79 (KQAAWG), Lys-106, and 124–125 (WE). Cys-129 and Cys-167 form a disulfide bridge. The tract at residues 150-159 (YTLLGMIGEQ) is EIF4G-binding. MRNA contacts are provided by residues 174-179 (RNRQEK) and 219-223 (KKHDR).

The protein belongs to the eukaryotic initiation factor 4E family. EIF4F is a multi-subunit complex, the composition of which varies with external and internal environmental conditions. It is composed of at least EIF4A, EIF4E and EIF4G. EIF4E is also known to interact with other partners. In higher plants two isoforms of EIF4F have been identified, named isoform EIF4F and isoform EIF(iso)4F. Isoform EIF4F has subunits p220 and p26, whereas isoform EIF(iso)4F has subunits p82 and p28. As to quaternary structure, (Microbial infection) Interacts with potyvirus peanut stripe virus (PStV) helper component proteinase (HC-Pro) in the cytoplasm and with PStV viral genome-linked protein (VPg) in the nucleus; these interactions are possible in susceptible hosts but impaired in resistant plants. According to the redox status, the Cys-129-Cys-167 disulfide bridge may have a role in regulating protein function by affecting its ability to bind capped mRNA. Expressed ubiquitously with highest levels in young leaves and roots, and lowest levels in flowers.

It localises to the nucleus. The protein resides in the cytoplasm. Its function is as follows. Component of the protein complex eIF4F, which is involved in the recognition of the mRNA cap, ATP-dependent unwinding of 5'-terminal secondary structure and recruitment of mRNA to the ribosome. Recognizes and binds the 7-methylguanosine-containing mRNA cap during an early step in the initiation of protein synthesis and facilitates ribosome binding by inducing the unwinding of the mRNAs secondary structures. Key component of recessive resistance to potyviruses such as peanut stripe virus (PStV). Functionally, (Microbial infection) Susceptibility host factor required for viral infection by recruiting viral RNAs to the host ribosomal complex via an interaction with viral genome-linked protein (VPg). This is Eukaryotic translation initiation factor 4E-1 from Arachis hypogaea (Peanut).